Here is a 99-residue protein sequence, read N- to C-terminus: Cobalt transport protein CbiN (99 aa).

A run of 2 helical transmembrane segments spans residues 6-26 (VLMIIGIIILTIAPLVMYSGL) and 68-88 (SLLFALQAAIGAIIIGYFFGY).

It belongs to the CbiN family. In terms of assembly, forms an energy-coupling factor (ECF) transporter complex composed of an ATP-binding protein (A component, CbiO), a transmembrane protein (T component, CbiQ) and 2 possible substrate-capture proteins (S components, CbiM and CbiN) of unknown stoichimetry.

The protein localises to the cell membrane. It functions in the pathway cofactor biosynthesis; adenosylcobalamin biosynthesis. Its function is as follows. Part of the energy-coupling factor (ECF) transporter complex CbiMNOQ involved in cobalt import. This Methanococcus vannielii (strain ATCC 35089 / DSM 1224 / JCM 13029 / OCM 148 / SB) protein is Cobalt transport protein CbiN.